Here is a 375-residue protein sequence, read N- to C-terminus: Nucleosome assembly protein 1-like 4 (375 aa).

The segment at 1 to 31 (MADHSFSDGVPSDSVEAAKNASNTEKLTDQV) is disordered. Residue alanine 2 is modified to N-acetylalanine. Residues serine 5, serine 7, and serine 12 each carry the phosphoserine modification. Over residues 20–31 (NASNTEKLTDQV) the composition is skewed to polar residues. Threonine 51 is subject to Phosphothreonine. Serine 53 and serine 54 each carry phosphoserine. The residue at position 58 (threonine 58) is a Phosphothreonine. Residue lysine 105 is modified to N6-acetyllysine. The segment at 116 to 137 (PTDAESEWHSENEEEEKLAGDM) is disordered. Over residues 121–137 (SEWHSENEEEEKLAGDM) the composition is skewed to basic and acidic residues. Residue serine 125 is modified to Phosphoserine. Lysine 146 carries the N6-acetyllysine modification. A Nuclear localization signal motif is present at residues 265 to 271 (IKKKQKH). Serine 304 carries the post-translational modification Phosphoserine. The segment at 339-375 (AIEDDDNFEEGEEGEEEELEGDEEGEDEDDAEINPKV) is disordered.

This sequence belongs to the nucleosome assembly protein (NAP) family. In terms of assembly, interacts with core (H2A, CD2APH2B, H3, H4) and linker (H1) histones. (Microbial infection) Interacts with Chikungunya virus non-structural protein 3 (via C-terminus). Post-translationally, phosphorylated at the G0/G1 boundary but it is not phosphorylated in S-phase. Phosphorylated protein remains in the cytoplasm in a complex with histones during the G0/G1 transition, whereas dephosphorylation triggers its transport into the nucleus at the G1/S-boundary. In terms of processing, polyglutamylated by TTLL4, a modification that occurs exclusively on glutamate residues and results in polyglutamate chains on the gamma-carboxyl group. Some residues may also be monoglycylated but not polyglycylated due to the absence of functional TTLL10 in human. In terms of tissue distribution, ubiquitous. Biallelically expressed in fetal and adult tissues. Highest levels in testis.

Its subcellular location is the nucleus. It localises to the cytoplasm. In terms of biological role, acts as a histone chaperone in nucleosome assembly. The polypeptide is Nucleosome assembly protein 1-like 4 (Homo sapiens (Human)).